The sequence spans 408 residues: 4-O-methyl-glucuronoyl methylesterase 1 (408 aa).

The signal sequence occupies residues 1–19; that stretch reads MASSSRFAALLLLALPALA. 3 disulfides stabilise this stretch: Cys31–Cys65, Cys218–Cys354, and Cys250–Cys326. A GXSYXG catalytic site motif motif is present at residues 217–222; the sequence is GCSRDG. The active-site Nucleophile is Ser219. Substrate contacts are provided by Lys223, Gln265, and Glu273. Asn287 is a glycosylation site (N-linked (GlcNAc...) asparagine). Trp317 contacts substrate. Asn350 is a glycosylation site (N-linked (GlcNAc...) asparagine). His353 functions as the Proton donor/acceptor in the catalytic mechanism. Asn390, Asn395, and Asn401 each carry an N-linked (GlcNAc...) asparagine glycan.

It belongs to the carbohydrate esterase 15 (CE15) family.

It is found in the secreted. The enzyme catalyses a 4-O-methyl-alpha-D-glucuronosyl ester derivative + H2O = 4-O-methyl-alpha-D-glucuronate derivative + an alcohol + H(+). In terms of biological role, glucuronoyl esterase which may play a significant role in biomass degradation, as it is considered to disconnect hemicellulose from lignin through the hydrolysis of the ester bond between 4-O-methyl-D-glucuronic acid residues of glucuronoxylans and aromatic alcohols of lignin. Can hydrolyze benzyl glucuronic acid (BnGlcA), allyl glucuronic acid (allylGlcA) and to a lower degree methyl glucuronic acid (MeGlcA) in vitro. In Wolfiporia cocos (strain MD-104) (Brown rot fungus), this protein is 4-O-methyl-glucuronoyl methylesterase 1.